Here is a 63-residue protein sequence, read N- to C-terminus: Synergistic-type venom protein C9S3, chain 2 (63 aa).

Disulfide bonds link Cys-3–Cys-24, Cys-17–Cys-42, and Cys-46–Cys-57.

Belongs to the three-finger toxin family. Short-chain subfamily. Aminergic toxin sub-subfamily. Heterodimer of C9S3 chain 1 (AC P01408) and chain 2, linked by at least two disulfide bonds. As to expression, expressed by the venom gland.

It is found in the secreted. Functionally, this protein shows a synergetic toxic effect in that it enhances the toxicity of other D.angusticeps toxins. In Dendroaspis angusticeps (Eastern green mamba), this protein is Synergistic-type venom protein C9S3, chain 2.